A 58-amino-acid polypeptide reads, in one-letter code: MAKTVVKKNESLDDALRRFKRTVSKSGTLAEYRKREFYEKPSVRRKLKSEAARKRKKF.

This sequence belongs to the bacterial ribosomal protein bS21 family.

The polypeptide is Small ribosomal subunit protein bS21 (Lacticaseibacillus paracasei (strain ATCC 334 / BCRC 17002 / CCUG 31169 / CIP 107868 / KCTC 3260 / NRRL B-441) (Lactobacillus paracasei)).